Consider the following 598-residue polypeptide: Elongation factor 4 (598 aa).

The tr-type G domain occupies 2–184 (KNIRNFSIIA…EIVAKIPAPE (183 aa)). Residues 14–19 (DHGKST) and 131–134 (NKID) contribute to the GTP site.

It belongs to the TRAFAC class translation factor GTPase superfamily. Classic translation factor GTPase family. LepA subfamily.

Its subcellular location is the cell inner membrane. The catalysed reaction is GTP + H2O = GDP + phosphate + H(+). Required for accurate and efficient protein synthesis under certain stress conditions. May act as a fidelity factor of the translation reaction, by catalyzing a one-codon backward translocation of tRNAs on improperly translocated ribosomes. Back-translocation proceeds from a post-translocation (POST) complex to a pre-translocation (PRE) complex, thus giving elongation factor G a second chance to translocate the tRNAs correctly. Binds to ribosomes in a GTP-dependent manner. The protein is Elongation factor 4 of Haemophilus influenzae (strain 86-028NP).